Here is a 264-residue protein sequence, read N- to C-terminus: MSDILDKIIAVKREEIAQAIKRKPLAVVREDAESRVLTRDFVGALRAKISAGKPAVIAEVKKASPSKGVLRADFIPADIAQSYAEHGAACLSVLTDRQFFQGSVDYLKQARASCALPVLRKDFMVDAYQVYEARVMGADCILLIVACLDDAQMKALEALAFSLDMAVLVEVHDEAELERALKLRTPLVGINNRNLKTFEVSLDNTLSLLGKVPADRLLVTESGISTPADVKRLREARVNAFLVGEAFMRAEDPGVALAQLFGLD.

The protein belongs to the TrpC family.

It carries out the reaction 1-(2-carboxyphenylamino)-1-deoxy-D-ribulose 5-phosphate + H(+) = (1S,2R)-1-C-(indol-3-yl)glycerol 3-phosphate + CO2 + H2O. Its pathway is amino-acid biosynthesis; L-tryptophan biosynthesis; L-tryptophan from chorismate: step 4/5. In Polaromonas sp. (strain JS666 / ATCC BAA-500), this protein is Indole-3-glycerol phosphate synthase.